A 372-amino-acid polypeptide reads, in one-letter code: Queuine tRNA-ribosyltransferase (372 aa).

Aspartate 89 functions as the Proton acceptor in the catalytic mechanism. Residues 89–93, aspartate 161, and glycine 232 each bind substrate; that span reads DSGGF. The interval 262–268 is RNA binding; that stretch reads GIGDLPS. The active-site Nucleophile is the aspartate 281. Residues 286-290 are RNA binding; important for wobble base 34 recognition; it reads TKAAR. Zn(2+) is bound by residues cysteine 319, cysteine 321, cysteine 324, and histidine 351.

Belongs to the queuine tRNA-ribosyltransferase family. As to quaternary structure, homodimer. Within each dimer, one monomer is responsible for RNA recognition and catalysis, while the other monomer binds to the replacement base PreQ1. Zn(2+) is required as a cofactor.

It carries out the reaction 7-aminomethyl-7-carbaguanine + guanosine(34) in tRNA = 7-aminomethyl-7-carbaguanosine(34) in tRNA + guanine. The protein operates within tRNA modification; tRNA-queuosine biosynthesis. Functionally, catalyzes the base-exchange of a guanine (G) residue with the queuine precursor 7-aminomethyl-7-deazaguanine (PreQ1) at position 34 (anticodon wobble position) in tRNAs with GU(N) anticodons (tRNA-Asp, -Asn, -His and -Tyr). Catalysis occurs through a double-displacement mechanism. The nucleophile active site attacks the C1' of nucleotide 34 to detach the guanine base from the RNA, forming a covalent enzyme-RNA intermediate. The proton acceptor active site deprotonates the incoming PreQ1, allowing a nucleophilic attack on the C1' of the ribose to form the product. After dissociation, two additional enzymatic reactions on the tRNA convert PreQ1 to queuine (Q), resulting in the hypermodified nucleoside queuosine (7-(((4,5-cis-dihydroxy-2-cyclopenten-1-yl)amino)methyl)-7-deazaguanosine). The polypeptide is Queuine tRNA-ribosyltransferase (Chlamydia felis (strain Fe/C-56) (Chlamydophila felis)).